We begin with the raw amino-acid sequence, 119 residues long: MIFGHGIDLQEISAVKKAYDRNPRFAKKVLTPKEWERFESLSGERQMSFLAGRWAGKEAFSKAWGTGIGAVGFKDIEILNNDKGAPVVTQSPFEGNVFISISHSGDFVQASVILEKNKR.

Mg(2+) contacts are provided by D8 and E58.

This sequence belongs to the P-Pant transferase superfamily. AcpS family. Requires Mg(2+) as cofactor.

The protein localises to the cytoplasm. The enzyme catalyses apo-[ACP] + CoA = holo-[ACP] + adenosine 3',5'-bisphosphate + H(+). Transfers the 4'-phosphopantetheine moiety from coenzyme A to a Ser of acyl-carrier-protein. This chain is Holo-[acyl-carrier-protein] synthase, found in Streptococcus thermophilus (strain ATCC BAA-491 / LMD-9).